We begin with the raw amino-acid sequence, 213 residues long: Ras-related protein Rab-39B (213 aa).

Positions 17, 20, 21, 22, 23, 37, and 40 each coordinate GTP. Ser22 contacts Mg(2+). Residues 35–43 (QVSDPTVGV) are switch-I. Residues Thr40 and Asp64 each coordinate Mg(2+). GTP-binding residues include Gly67, His123, Lys124, Asp126, Ala154, and Arg155. The segment at 67–83 (GQERFRSITRAYYRNSV) is switch-II. At Ser201 the chain carries Phosphoserine. 2 S-geranylgeranyl cysteine lipidation sites follow: Cys211 and Cys213. Cys213 carries the cysteine methyl ester modification.

It belongs to the small GTPase superfamily. Rab family. Interacts (GDP-bound) with C9orf72; C9orf72 in complex with SMCR8 acts as a GEF for RAB39B. Interacts (in GTP-bound form) with PICK1 (via PDZ domain); a PICK1 homodimer may allow simultaneous association of RAB39B and GRIA2 to PICK1 which is involved in GRIA2 trafficking. Interacts with isoform c of RASSF1; the interaction is strong. Interacts with isoform a of RASSF1; the interaction is weak. Interacts with the DLG4/PSD-95. Interacts (GTP-bound) with HOPS complex components VPS39 and VPS41. Requires Mg(2+) as cofactor. Specifically expressed in neuron and neuronal precursors in the brain. Expression is high in all regions of the brain with highest levels observed in the hippocampus.

It localises to the cell membrane. The protein resides in the cytoplasmic vesicle membrane. The protein localises to the golgi apparatus. It is found in the cytoplasmic vesicle. Its subcellular location is the autophagosome membrane. It localises to the autolysosome membrane. The catalysed reaction is GTP + H2O = GDP + phosphate + H(+). With respect to regulation, regulated by guanine nucleotide exchange factors (GEFs) including C9orf72-SMCR8 complex, which promote the exchange of bound GDP for free GTP. Regulated by GTPase activating proteins (GAPs) which increase the GTP hydrolysis activity. Inhibited by GDP dissociation inhibitors (GDIs). The small GTPases Rab are key regulators of intracellular membrane trafficking, from the formation of transport vesicles to their fusion with membranes. Rabs cycle between an inactive GDP-bound form and an active GTP-bound form that is able to recruit to membranes different sets of downstream effectors directly responsible for vesicle formation, movement, tethering and fusion. RAB39B is involved in autophagy and may function in autophagosome formation. Binds downstream effector PICK1 to ensure selectively GRIA2 exit from the endoplasmic reticulum to the Golgi and to regulate AMPAR composition at the post-synapses and thus synaptic transmission. May regulate the homeostasis of SNCA/alpha-synuclein. The sequence is that of Ras-related protein Rab-39B from Mus musculus (Mouse).